The following is a 459-amino-acid chain: MSNFAIXLAAGKGTRMKSDLPKVLHKVAGIPMLEYVXRSVGAIXPXKTVTVVGHKAELVEEVLTGQTEFVTQSEQLGTGHAVMMTEPILEGLSGHTLVIAGDTPLITGESLKNLIDFHINHKNVATILTAETDNPFGYGRIVRNDNAEXLRIVEQKDATDFEKQIKEINTGTYVFDNERLFEALKNINTNNAQGEYYITDVIGIFRETGEKVGAYTLKDFDESLGVNDRVALATAESVMRRRINHKHMVNGVSFVNPEATYIDIDVEIAPEVQIEANVTLKGQTKIGAETVLTNGTYVVDSTIGAGAVITNSMIEESSVADGVTVGPYAHIRPNSSLGAQVHIGNFVEVKGSSIGENTKAGHLTYIGNCEVGSNVNFGAGTITVNYDGKNKYKTVIGDNVFVGSNSTIIAPVXLGDNSLVGAGSTITKDVPADAIAIGRGRQINKDEYATRLPHHPKNQ.

Residues 1-229 are pyrophosphorylase; sequence MSNFAIXLAA…FDESLGVNDR (229 aa). Residues 8–11, lysine 22, glutamine 72, and 77–78 each bind UDP-N-acetyl-alpha-D-glucosamine; these read LAAG and GT. Residue aspartate 102 participates in Mg(2+) binding. UDP-N-acetyl-alpha-D-glucosamine contacts are provided by glycine 139, glutamate 154, asparagine 169, and asparagine 227. Asparagine 227 is a Mg(2+) binding site. The linker stretch occupies residues 230–250; the sequence is VALATAESVMRRRINHKHMVN. The interval 251 to 459 is N-acetyltransferase; the sequence is GVSFVNPEAT…TRLPHHPKNQ (209 aa). Residues arginine 332 and lysine 350 each coordinate UDP-N-acetyl-alpha-D-glucosamine. Histidine 362 (proton acceptor) is an active-site residue. Positions 365 and 376 each coordinate UDP-N-acetyl-alpha-D-glucosamine. Acetyl-CoA contacts are provided by residues alanine 379, 385–386, serine 404, alanine 422, and arginine 439; that span reads NY.

This sequence in the N-terminal section; belongs to the N-acetylglucosamine-1-phosphate uridyltransferase family. The protein in the C-terminal section; belongs to the transferase hexapeptide repeat family. As to quaternary structure, homotrimer. Mg(2+) is required as a cofactor.

It is found in the cytoplasm. The enzyme catalyses alpha-D-glucosamine 1-phosphate + acetyl-CoA = N-acetyl-alpha-D-glucosamine 1-phosphate + CoA + H(+). The catalysed reaction is N-acetyl-alpha-D-glucosamine 1-phosphate + UTP + H(+) = UDP-N-acetyl-alpha-D-glucosamine + diphosphate. The protein operates within nucleotide-sugar biosynthesis; UDP-N-acetyl-alpha-D-glucosamine biosynthesis; N-acetyl-alpha-D-glucosamine 1-phosphate from alpha-D-glucosamine 6-phosphate (route II): step 2/2. It participates in nucleotide-sugar biosynthesis; UDP-N-acetyl-alpha-D-glucosamine biosynthesis; UDP-N-acetyl-alpha-D-glucosamine from N-acetyl-alpha-D-glucosamine 1-phosphate: step 1/1. It functions in the pathway bacterial outer membrane biogenesis; LPS lipid A biosynthesis. Its function is as follows. Catalyzes the last two sequential reactions in the de novo biosynthetic pathway for UDP-N-acetylglucosamine (UDP-GlcNAc). The C-terminal domain catalyzes the transfer of acetyl group from acetyl coenzyme A to glucosamine-1-phosphate (GlcN-1-P) to produce N-acetylglucosamine-1-phosphate (GlcNAc-1-P), which is converted into UDP-GlcNAc by the transfer of uridine 5-monophosphate (from uridine 5-triphosphate), a reaction catalyzed by the N-terminal domain. The polypeptide is Bifunctional protein GlmU (Streptococcus pneumoniae serotype 19F (strain G54)).